The primary structure comprises 187 residues: Cytokinin riboside 5'-monophosphate phosphoribohydrolase (187 aa).

Residues Glu-80, 98–99 (RK), 115–121 (GVGTLDE), and Thr-127 each bind substrate.

It belongs to the LOG family.

It catalyses the reaction N(6)-(dimethylallyl)adenosine 5'-phosphate + H2O = N(6)-dimethylallyladenine + D-ribose 5-phosphate. The enzyme catalyses 9-ribosyl-trans-zeatin 5'-phosphate + H2O = trans-zeatin + D-ribose 5-phosphate. In terms of biological role, catalyzes the hydrolytic removal of ribose 5'-monophosphate from nitrogen N6-modified adenosines, the final step of bioactive cytokinin synthesis. This Mycobacterium marinum (strain ATCC BAA-535 / M) protein is Cytokinin riboside 5'-monophosphate phosphoribohydrolase.